The primary structure comprises 259 residues: Ribosome maturation factor RimP (259 aa).

Positions 186-195 (RGKQAERELK) are enriched in basic and acidic residues. A disordered region spans residues 186 to 259 (RGKQAERELK…RGDTDLSEGD (74 aa)). Basic residues predominate over residues 239-248 (KQHRLAAGRS).

The protein belongs to the RimP family.

Its subcellular location is the cytoplasm. In terms of biological role, required for maturation of 30S ribosomal subunits. The polypeptide is Ribosome maturation factor RimP (Rhodopseudomonas palustris (strain HaA2)).